The chain runs to 193 residues: Pyridoxal 5'-phosphate synthase subunit PdxT (193 aa).

50–52 (GES) contributes to the L-glutamine binding site. The Nucleophile role is filled by Cys82. Residues Arg109 and 136 to 137 (IR) each bind L-glutamine. Residues His172 and Glu174 each act as charge relay system in the active site.

This sequence belongs to the glutaminase PdxT/SNO family. In terms of assembly, in the presence of PdxS, forms a dodecamer of heterodimers. Only shows activity in the heterodimer.

It catalyses the reaction aldehydo-D-ribose 5-phosphate + D-glyceraldehyde 3-phosphate + L-glutamine = pyridoxal 5'-phosphate + L-glutamate + phosphate + 3 H2O + H(+). It carries out the reaction L-glutamine + H2O = L-glutamate + NH4(+). It functions in the pathway cofactor biosynthesis; pyridoxal 5'-phosphate biosynthesis. Its function is as follows. Catalyzes the hydrolysis of glutamine to glutamate and ammonia as part of the biosynthesis of pyridoxal 5'-phosphate. The resulting ammonia molecule is channeled to the active site of PdxS. The sequence is that of Pyridoxal 5'-phosphate synthase subunit PdxT from Streptococcus pneumoniae serotype 19F (strain G54).